The following is a 246-amino-acid chain: tRNA pseudouridine synthase A (246 aa).

Residue aspartate 52 is the Nucleophile of the active site. Tyrosine 111 contributes to the substrate binding site.

The protein belongs to the tRNA pseudouridine synthase TruA family. In terms of assembly, homodimer.

The catalysed reaction is uridine(38/39/40) in tRNA = pseudouridine(38/39/40) in tRNA. Formation of pseudouridine at positions 38, 39 and 40 in the anticodon stem and loop of transfer RNAs. The polypeptide is tRNA pseudouridine synthase A (Borreliella burgdorferi (strain ZS7) (Borrelia burgdorferi)).